Here is a 320-residue protein sequence, read N- to C-terminus: Lipoyl synthase (320 aa).

Residues Cys-67, Cys-72, Cys-78, Cys-93, Cys-97, Cys-100, and Ser-307 each contribute to the [4Fe-4S] cluster site. A Radical SAM core domain is found at 79 to 296 (FNHGTATFMI…REKANEMGFE (218 aa)).

Belongs to the radical SAM superfamily. Lipoyl synthase family. [4Fe-4S] cluster is required as a cofactor.

It is found in the cytoplasm. It catalyses the reaction [[Fe-S] cluster scaffold protein carrying a second [4Fe-4S](2+) cluster] + N(6)-octanoyl-L-lysyl-[protein] + 2 oxidized [2Fe-2S]-[ferredoxin] + 2 S-adenosyl-L-methionine + 4 H(+) = [[Fe-S] cluster scaffold protein] + N(6)-[(R)-dihydrolipoyl]-L-lysyl-[protein] + 4 Fe(3+) + 2 hydrogen sulfide + 2 5'-deoxyadenosine + 2 L-methionine + 2 reduced [2Fe-2S]-[ferredoxin]. It functions in the pathway protein modification; protein lipoylation via endogenous pathway; protein N(6)-(lipoyl)lysine from octanoyl-[acyl-carrier-protein]: step 2/2. Functionally, catalyzes the radical-mediated insertion of two sulfur atoms into the C-6 and C-8 positions of the octanoyl moiety bound to the lipoyl domains of lipoate-dependent enzymes, thereby converting the octanoylated domains into lipoylated derivatives. The protein is Lipoyl synthase of Glaesserella parasuis serovar 5 (strain SH0165) (Haemophilus parasuis).